A 289-amino-acid polypeptide reads, in one-letter code: Diaminopimelate epimerase (289 aa).

Positions 13, 47, and 67 each coordinate substrate. Residue Cys-76 is the Proton donor of the active site. Substrate-binding positions include 77-78 (GN), Asn-167, Asn-200, and 218-219 (ER). Cys-227 (proton acceptor) is an active-site residue. 228 to 229 (GT) lines the substrate pocket.

This sequence belongs to the diaminopimelate epimerase family. In terms of assembly, homodimer.

It is found in the cytoplasm. The enzyme catalyses (2S,6S)-2,6-diaminopimelate = meso-2,6-diaminopimelate. It functions in the pathway amino-acid biosynthesis; L-lysine biosynthesis via DAP pathway; DL-2,6-diaminopimelate from LL-2,6-diaminopimelate: step 1/1. In terms of biological role, catalyzes the stereoinversion of LL-2,6-diaminopimelate (L,L-DAP) to meso-diaminopimelate (meso-DAP), a precursor of L-lysine and an essential component of the bacterial peptidoglycan. The polypeptide is Diaminopimelate epimerase (Burkholderia mallei (strain NCTC 10247)).